The primary structure comprises 899 residues: Probable disease resistance protein RXW24L (899 aa).

Residues 13-50 are a coiled coil; that stretch reads DRLSQEYDQFKGVEDQVTELKSNLNLLKSFLKDADAKK. The region spanning 143–455 is the NB-ARC domain; sequence LQERQREMRH…AEGISERRRY (313 aa). 189 to 196 lines the ATP pocket; sequence GMGGLGKT.

The protein belongs to the disease resistance NB-LRR family.

Its function is as follows. Potential disease resistance protein. The sequence is that of Probable disease resistance protein RXW24L (RXW24L) from Arabidopsis thaliana (Mouse-ear cress).